The sequence spans 456 residues: Argininosuccinate lyase (456 aa).

It belongs to the lyase 1 family. Argininosuccinate lyase subfamily.

The protein localises to the cytoplasm. It catalyses the reaction 2-(N(omega)-L-arginino)succinate = fumarate + L-arginine. The protein operates within amino-acid biosynthesis; L-arginine biosynthesis; L-arginine from L-ornithine and carbamoyl phosphate: step 3/3. This chain is Argininosuccinate lyase, found in Listeria monocytogenes serotype 4a (strain HCC23).